The chain runs to 533 residues: WD repeat-containing protein JIP5 (533 aa).

WD repeat units lie at residues 26–67 (NYSD…EKQS), 84–130 (GKVS…GSCR), 176–215 (NSND…GSKL), 264–309 (NQDD…FMDQ), and 372–409 (GAAD…EIAL). Composition is skewed to acidic residues over residues 408–428 (ALDE…EDDL) and 437–452 (ASDE…EDEK). The segment at 408 to 533 (ALDESDDSDD…EHGIRRFDDL (126 aa)) is disordered. Basic and acidic residues-rich tracts occupy residues 453–463 (EDKPVKIDHPL) and 521–533 (QKHE…FDDL).

It belongs to the WD repeat WDR55 family.

The protein resides in the nucleus. Its subcellular location is the nucleolus. This is WD repeat-containing protein JIP5 (JIP5) from Scheffersomyces stipitis (strain ATCC 58785 / CBS 6054 / NBRC 10063 / NRRL Y-11545) (Yeast).